The primary structure comprises 616 residues: UPF0329 protein ECU02_1540 (616 aa).

2 stretches are compositionally biased toward basic and acidic residues: residues 350–359 and 369–381; these read EREKREESKG and GAGEAKEESKEED. Positions 350 to 427 are disordered; the sequence is EREKREESKG…RKGDGHHYKI (78 aa). The segment covering 382–396 has biased composition (acidic residues); that stretch reads GKEEEGVEAEEEESA. Basic residues predominate over residues 408–427; the sequence is ARRKKSLKGKRKGDGHHYKI.

Belongs to the UPF0329 family.

The protein is UPF0329 protein ECU02_1540 of Encephalitozoon cuniculi (strain GB-M1) (Microsporidian parasite).